Consider the following 241-residue polypeptide: Putative inactive serine protease 58 (241 aa).

An N-terminal signal peptide occupies residues 1–17 (MKLAFLCILSTLLRTFA). Residues 18-239 (YNPDHIAGTT…YLPWIEDTMK (222 aa)) form the Peptidase S1 domain. Cysteine 41 and cysteine 57 are disulfide-bonded. Catalysis depends on charge relay system residues histidine 56 and aspartate 101. Disulfide bonds link cysteine 133–cysteine 201, cysteine 165–cysteine 180, and cysteine 191–cysteine 215. Residue asparagine 156 is glycosylated (N-linked (GlcNAc...) asparagine).

Belongs to the peptidase S1 family.

The protein localises to the secreted. The catalysed reaction is Preferential cleavage: Arg-|-Xaa, Lys-|-Xaa.. The polypeptide is Putative inactive serine protease 58 (Prss58) (Mus musculus (Mouse)).